A 222-amino-acid polypeptide reads, in one-letter code: Superoxide dismutase [Mn], mitochondrial (222 aa).

A mitochondrion-targeting transit peptide spans 1–24 (MLSRGVCGTSRQLAPALGYLGSRQ). His-50 is a binding site for Mn(2+). Tyr-58 carries the 3'-nitrotyrosine modification. 2 positions are modified to N6-acetyllysine; alternate: Lys-68 and Lys-75. Lys-68 and Lys-75 each carry N6-succinyllysine; alternate. His-98 is a binding site for Mn(2+). Lys-114 carries the N6-acetyllysine modification. N6-acetyllysine; alternate is present on residues Lys-122 and Lys-130. N6-succinyllysine; alternate occurs at positions 122 and 130. Asp-183 and His-187 together coordinate Mn(2+). An N6-acetyllysine modification is found at Lys-202.

Belongs to the iron/manganese superoxide dismutase family. Homotetramer. The cofactor is Mn(2+). Post-translationally, nitrated under oxidative stress. Nitration coupled with oxidation inhibits the catalytic activity. In terms of processing, acetylation at Lys-122 decreases enzymatic activity. Deacetylated by SIRT3 upon exposure to ionizing radiations or after long fasting. Polyubiquitinated; leading to proteasomal degradation. Deubiquitinated by USP36 which increases protein stability.

The protein resides in the mitochondrion matrix. The catalysed reaction is 2 superoxide + 2 H(+) = H2O2 + O2. Destroys superoxide anion radicals which are normally produced within the cells and which are toxic to biological systems. The sequence is that of Superoxide dismutase [Mn], mitochondrial (SOD2) from Pongo pygmaeus (Bornean orangutan).